A 167-amino-acid chain; its full sequence is NAD(P)H-quinone oxidoreductase subunit I, chloroplastic (167 aa).

2 4Fe-4S ferredoxin-type domains span residues 55–84 and 95–124; these read GRIHFEFDKCIACEVCVRVCPIDLPVVDWK and LNYSIDFGICIFCGNCVEYCPTNCLSMTEE. [4Fe-4S] cluster is bound by residues cysteine 64, cysteine 67, cysteine 70, cysteine 74, cysteine 104, cysteine 107, cysteine 110, and cysteine 114.

It belongs to the complex I 23 kDa subunit family. In terms of assembly, NDH is composed of at least 16 different subunits, 5 of which are encoded in the nucleus. The cofactor is [4Fe-4S] cluster.

It localises to the plastid. It is found in the chloroplast thylakoid membrane. The enzyme catalyses a plastoquinone + NADH + (n+1) H(+)(in) = a plastoquinol + NAD(+) + n H(+)(out). It catalyses the reaction a plastoquinone + NADPH + (n+1) H(+)(in) = a plastoquinol + NADP(+) + n H(+)(out). Functionally, NDH shuttles electrons from NAD(P)H:plastoquinone, via FMN and iron-sulfur (Fe-S) centers, to quinones in the photosynthetic chain and possibly in a chloroplast respiratory chain. The immediate electron acceptor for the enzyme in this species is believed to be plastoquinone. Couples the redox reaction to proton translocation, and thus conserves the redox energy in a proton gradient. This is NAD(P)H-quinone oxidoreductase subunit I, chloroplastic from Morus indica (Mulberry).